The sequence spans 186 residues: Outer-membrane lipoprotein LolB (186 aa).

Positions 1 to 16 (MRRLAVIASLAWALGG) are cleaved as a signal peptide. C17 carries the N-palmitoyl cysteine lipid modification. C17 carries the S-diacylglycerol cysteine lipid modification.

It belongs to the LolB family. Monomer.

The protein resides in the cell outer membrane. Functionally, plays a critical role in the incorporation of lipoproteins in the outer membrane after they are released by the LolA protein. This chain is Outer-membrane lipoprotein LolB, found in Thiobacillus denitrificans (strain ATCC 25259 / T1).